Here is a 254-residue protein sequence, read N- to C-terminus: 3-deoxy-manno-octulosonate cytidylyltransferase (254 aa).

The protein belongs to the KdsB family.

The protein resides in the cytoplasm. It catalyses the reaction 3-deoxy-alpha-D-manno-oct-2-ulosonate + CTP = CMP-3-deoxy-beta-D-manno-octulosonate + diphosphate. It functions in the pathway nucleotide-sugar biosynthesis; CMP-3-deoxy-D-manno-octulosonate biosynthesis; CMP-3-deoxy-D-manno-octulosonate from 3-deoxy-D-manno-octulosonate and CTP: step 1/1. Its pathway is bacterial outer membrane biogenesis; lipopolysaccharide biosynthesis. In terms of biological role, activates KDO (a required 8-carbon sugar) for incorporation into bacterial lipopolysaccharide in Gram-negative bacteria. The sequence is that of 3-deoxy-manno-octulosonate cytidylyltransferase from Pseudomonas fluorescens (strain ATCC BAA-477 / NRRL B-23932 / Pf-5).